A 95-amino-acid chain; its full sequence is Co-chaperonin GroES (95 aa).

It belongs to the GroES chaperonin family. As to quaternary structure, heptamer of 7 subunits arranged in a ring. Interacts with the chaperonin GroEL.

It localises to the cytoplasm. Its function is as follows. Together with the chaperonin GroEL, plays an essential role in assisting protein folding. The GroEL-GroES system forms a nano-cage that allows encapsulation of the non-native substrate proteins and provides a physical environment optimized to promote and accelerate protein folding. GroES binds to the apical surface of the GroEL ring, thereby capping the opening of the GroEL channel. This is Co-chaperonin GroES from Cereibacter sphaeroides (strain KD131 / KCTC 12085) (Rhodobacter sphaeroides).